Consider the following 403-residue polypeptide: Tryptophan synthase beta chain (403 aa).

The residue at position 87 (Lys-87) is an N6-(pyridoxal phosphate)lysine.

This sequence belongs to the TrpB family. In terms of assembly, tetramer of two alpha and two beta chains. Pyridoxal 5'-phosphate serves as cofactor.

It catalyses the reaction (1S,2R)-1-C-(indol-3-yl)glycerol 3-phosphate + L-serine = D-glyceraldehyde 3-phosphate + L-tryptophan + H2O. The protein operates within amino-acid biosynthesis; L-tryptophan biosynthesis; L-tryptophan from chorismate: step 5/5. Functionally, the beta subunit is responsible for the synthesis of L-tryptophan from indole and L-serine. This is Tryptophan synthase beta chain from Shewanella loihica (strain ATCC BAA-1088 / PV-4).